The chain runs to 123 residues: 13 kDa major membrane protein (123 aa).

Its subcellular location is the cell membrane. The protein is 13 kDa major membrane protein of Francisella tularensis subsp. holarctica (strain LVS).